We begin with the raw amino-acid sequence, 329 residues long: Putative glycosyltransferase CsbB (329 aa).

Transmembrane regions (helical) follow at residues 231-251 (CFYT…ATFV) and 264-284 (FTII…LGII).

Belongs to the glycosyltransferase 2 family. GtrB subfamily.

It is found in the cell membrane. This chain is Putative glycosyltransferase CsbB (csbB), found in Bacillus subtilis (strain 168).